The primary structure comprises 336 residues: ATP-dependent 6-phosphofructokinase 3 (336 aa).

ATP-binding positions include G10, R72 to E73, and G108 to T111. A Mg(2+)-binding site is contributed by N109. Residues T131–D133, R168, M175–H177, E228, R255, and Y261–R264 contribute to the substrate site. Catalysis depends on D133, which acts as the Proton acceptor.

It belongs to the phosphofructokinase type A (PFKA) family. Mixed-substrate PFK group III subfamily. Homodimer or homotetramer. The cofactor is Mg(2+).

The protein localises to the cytoplasm. The catalysed reaction is beta-D-fructose 6-phosphate + ATP = beta-D-fructose 1,6-bisphosphate + ADP + H(+). It participates in carbohydrate degradation; glycolysis; D-glyceraldehyde 3-phosphate and glycerone phosphate from D-glucose: step 3/4. In terms of biological role, catalyzes the phosphorylation of D-fructose 6-phosphate to fructose 1,6-bisphosphate by ATP, the first committing step of glycolysis. The sequence is that of ATP-dependent 6-phosphofructokinase 3 from Bacteroides thetaiotaomicron (strain ATCC 29148 / DSM 2079 / JCM 5827 / CCUG 10774 / NCTC 10582 / VPI-5482 / E50).